The chain runs to 689 residues: Ataxin-1-like (689 aa).

A compositionally biased stretch (basic and acidic residues) spans 1–19; it reads MKPVHERSQECLPPKKRDL. 3 disordered regions span residues 1–46, 185–223, and 242–297; these read MKPV…SEWS, ATPP…LDLA, and LHET…GEGQ. Positions 20–197 are interaction with NCOR2 and ATXN1; it reads PVTSEDMGRT…PPQAPSPAHS (178 aa). A self-association region spans residues 20–197; the sequence is PVTSEDMGRT…PPQAPSPAHS (178 aa). 2 stretches are compositionally biased toward polar residues: residues 28–43 and 200–219; these read RTTS…SDAS and KAPS…STQP. A compositionally biased stretch (low complexity) spans 257 to 268; the sequence is QESQSALEAAAA. Residues 273–285 show a composition bias toward basic and acidic residues; the sequence is RPRERNLVRRESE. Ser284 is modified (phosphoserine). At Thr330 the chain carries Phosphothreonine. The disordered stretch occupies residues 357–405; sequence KEEPSPLNLSHHTPDHQGEGRGSARNPAELAEKSQARGFYPQSHQEPVK. At Ser361 the chain carries Phosphoserine. An AXH domain is found at 457 to 588; it reads PPPITSSHLP…SISLQSLNSN (132 aa). At Ser615 the chain carries Phosphoserine. The tract at residues 617-647 is disordered; sequence ELCDSEGKSQPAGEGSRVVEPSQPESGAQAC.

Belongs to the ATXN1 family. As to quaternary structure, homodimer. Interacts with CIC. Interacts (via AXH domain) with NCOR2. Interacts with ATXN1. Directly interacts with RBPJ; this interaction is disrupted in the presence of Notch intracellular domain. Competes with ATXN1 for RBPJ-binding. Found in a complex with CIC and ATXN1. Expressed in cerebellum and cerebral cortex.

It is found in the nucleus. The protein localises to the cell projection. Its subcellular location is the dendrite. Functionally, chromatin-binding factor that repress Notch signaling in the absence of Notch intracellular domain by acting as a CBF1 corepressor. Binds to the HEY promoter and might assist, along with NCOR2, RBPJ-mediated repression. Can suppress ATXN1 cytotoxicity in spinocerebellar ataxia type 1 (SCA1). In concert with CIC and ATXN1, involved in brain development. The polypeptide is Ataxin-1-like (ATXN1L) (Homo sapiens (Human)).